A 67-amino-acid polypeptide reads, in one-letter code: Medusin-H1 (67 aa).

The signal sequence occupies residues methionine 1 to cysteine 22. Positions glutamate 23–arginine 48 are excised as a propeptide. Positions glutamate 24–glutamate 46 are disordered. Over residues glutamate 31–arginine 40 the composition is skewed to acidic residues. Leucine 66 carries the post-translational modification Leucine amide.

Belongs to the frog skin active peptide (FSAP) family. Medusin subfamily. As to expression, expressed by the skin glands.

It localises to the secreted. Its function is as follows. Antimicrobial peptide with activity against Gram-positive bacteria (S.aureus, MIC=32 mg/L) and fungi (C.albicans, MIC=128 mg/L). Shows weak hemolytic activity. The sequence is that of Medusin-H1 from Pithecopus hypochondrialis (Orange-legged leaf frog).